The following is a 161-amino-acid chain: Small ribosomal subunit protein uS8m (161 aa).

Belongs to the universal ribosomal protein uS8 family. Component of the mitochondrial small ribosomal subunit (mt-SSU). Mature N.crassa 74S mitochondrial ribosomes consist of a small (37S) and a large (54S) subunit. The 37S small subunit contains a 16S ribosomal RNA (16S mt-rRNA) and 32 different proteins. The 54S large subunit contains a 23S rRNA (23S mt-rRNA) and 42 different proteins.

It is found in the mitochondrion. In terms of biological role, component of the mitochondrial ribosome (mitoribosome), a dedicated translation machinery responsible for the synthesis of mitochondrial genome-encoded proteins, including at least some of the essential transmembrane subunits of the mitochondrial respiratory chain. The mitoribosomes are attached to the mitochondrial inner membrane and translation products are cotranslationally integrated into the membrane. The polypeptide is Small ribosomal subunit protein uS8m (mrps8) (Neurospora crassa (strain ATCC 24698 / 74-OR23-1A / CBS 708.71 / DSM 1257 / FGSC 987)).